The primary structure comprises 408 residues: 3-ketoacyl-CoA thiolase B, peroxisomal (408 aa).

The active-site Acyl-thioester intermediate is the Cys112. Catalysis depends on proton acceptor residues His366 and Cys394.

This sequence belongs to the thiolase-like superfamily. Thiolase family. In terms of assembly, homodimer.

Its subcellular location is the peroxisome. The enzyme catalyses an acyl-CoA + acetyl-CoA = a 3-oxoacyl-CoA + CoA. It participates in lipid metabolism; fatty acid metabolism. This chain is 3-ketoacyl-CoA thiolase B, peroxisomal, found in Candida tropicalis (Yeast).